We begin with the raw amino-acid sequence, 400 residues long: Transcription initiation factor IIF subunit beta (400 aa).

The span at 1 to 19 shows a compositional bias: polar residues; that stretch reads MSSGSAGAPALSNNSTNSV. Residues 1 to 47 are disordered; sequence MSSGSAGAPALSNNSTNSVAKEKSGNISGDEYLSQEEEVFDGNDIEN. Serine 28, serine 34, and serine 56 each carry phosphoserine. Residues 33–47 show a composition bias toward acidic residues; sequence LSQEEEVFDGNDIEN. 2 disordered regions span residues 165 to 194 and 366 to 400; these read QEREEELKKKQQQQKRRNNRKKFNHRVMTD and TLGELADEQTGSAGDNAQGDAEADLEDEIEMEDVV. The segment covering 174–189 has biased composition (basic residues); that stretch reads KQQQQKRRNNRKKFNH. Residues 386-400 show a composition bias toward acidic residues; it reads AEADLEDEIEMEDVV.

Belongs to the TFIIF beta subunit family. As to quaternary structure, TFIIF is composed of three different subunits: TFG1/RAP74, TFG2/RAP30 and TAF14.

Its subcellular location is the nucleus. Its function is as follows. TFIIF is a general transcription initiation factor that binds to RNA polymerase II. Its functions include the recruitment of RNA polymerase II to the promoter bound DNA-TBP-TFIIB complex, decreasing the affinity of RNA polymerase II for non-specific DNA, allowing for the subsequent recruitment of TFIIE and TFIIH, and facilitating RNA polymerase II elongation. In Saccharomyces cerevisiae (strain ATCC 204508 / S288c) (Baker's yeast), this protein is Transcription initiation factor IIF subunit beta (TFG2).